The following is a 670-amino-acid chain: tRNA 5-methylaminomethyl-2-thiouridine biosynthesis bifunctional protein MnmC (670 aa).

The tRNA (mnm(5)s(2)U34)-methyltransferase stretch occupies residues methionine 1 to isoleucine 242. The tract at residues isoleucine 269–glutamate 670 is FAD-dependent cmnm(5)s(2)U34 oxidoreductase.

This sequence in the N-terminal section; belongs to the methyltransferase superfamily. tRNA (mnm(5)s(2)U34)-methyltransferase family. The protein in the C-terminal section; belongs to the DAO family. Requires FAD as cofactor.

The protein localises to the cytoplasm. It carries out the reaction 5-aminomethyl-2-thiouridine(34) in tRNA + S-adenosyl-L-methionine = 5-methylaminomethyl-2-thiouridine(34) in tRNA + S-adenosyl-L-homocysteine + H(+). Catalyzes the last two steps in the biosynthesis of 5-methylaminomethyl-2-thiouridine (mnm(5)s(2)U) at the wobble position (U34) in tRNA. Catalyzes the FAD-dependent demodification of cmnm(5)s(2)U34 to nm(5)s(2)U34, followed by the transfer of a methyl group from S-adenosyl-L-methionine to nm(5)s(2)U34, to form mnm(5)s(2)U34. The sequence is that of tRNA 5-methylaminomethyl-2-thiouridine biosynthesis bifunctional protein MnmC from Haemophilus influenzae (strain 86-028NP).